Here is a 130-residue protein sequence, read N- to C-terminus: Small ribosomal subunit protein uS8 (130 aa).

It belongs to the universal ribosomal protein uS8 family. As to quaternary structure, part of the 30S ribosomal subunit. Contacts proteins S5 and S12.

Functionally, one of the primary rRNA binding proteins, it binds directly to 16S rRNA central domain where it helps coordinate assembly of the platform of the 30S subunit. The sequence is that of Small ribosomal subunit protein uS8 from Teredinibacter turnerae (strain ATCC 39867 / T7901).